The chain runs to 94 residues: DNA-directed RNA polymerase subunit omega (94 aa).

The protein belongs to the RNA polymerase subunit omega family. As to quaternary structure, the RNAP catalytic core consists of 2 alpha, 1 beta, 1 beta' and 1 omega subunit. When a sigma factor is associated with the core the holoenzyme is formed, which can initiate transcription.

The enzyme catalyses RNA(n) + a ribonucleoside 5'-triphosphate = RNA(n+1) + diphosphate. In terms of biological role, promotes RNA polymerase assembly. Latches the N- and C-terminal regions of the beta' subunit thereby facilitating its interaction with the beta and alpha subunits. The chain is DNA-directed RNA polymerase subunit omega from Parafrankia sp. (strain EAN1pec).